Reading from the N-terminus, the 69-residue chain is uncharacterized protein (69 aa).

Over 1–15 the chain is Cytoplasmic; sequence MLLYIVIIVACIISK. The helical transmembrane segment at 16–36 threads the bilayer; the sequence is LVPNEYWAIHLFFIIMIFMVY. Over 37 to 69 the chain is Extracellular; that stretch reads MYKKLDIHQKYQFWNYTMSGLSGHNVQVTCKCY. Residue asparagine 51 is glycosylated (N-linked (GlcNAc...) asparagine; by host).

The protein belongs to the asfivirus X69R family.

It is found in the host membrane. This is an uncharacterized protein from African swine fever virus (isolate Tick/Malawi/Lil 20-1/1983) (ASFV).